The sequence spans 552 residues: MTSLREFRKLCCDIYHASGYKEKSKLIRDFITDRDDKYLIIKLLLPGLDDRIYNMNDKQIIKLYSIIFKQSQEDMLQDLGYGYIGDTIRTFFKENTEIRPRDKSILTLEDVDSFLTTLSSVTKESHQIKLLTDIASVCTCNDLKCVVMLIDKDLKIKAGPRYVLNAISPNAYDVFRKSNNLKEIIENASKQNLDSISISVMTPINPMLAESCDSVNKAFKKFPSGMFAEVKYDGERVQVHKNNNEFAFFSRNMKPVLSHKVDYLKEYIPKAFKKATSIVLDSEIVLVDEHNVPLPFGSLGIHKKKEYKNSNMCLFVFDCLYFDGFDMTDIPLYERRSFLKDVMVEIPNRIVFSELTNISNESQLTDVLDDALTRKLEGLVLKDINGVYEPGKRRWLKIKRDYLNEGSMADSADLVVLGAYYGKGAKGGIMAVFLMGCYDDESGKWKTVTKCSGHDDNTLRVLQDQLTMVKINKDPKKIPEWLVVNKIYIPDFVVEDPKQSQIWEISGAEFTSSKSHTANGISIRFPRFTRIREDKTWKESTHLNDLVNLTKS.

E229 lines the ATP pocket. K231 serves as the catalytic N6-AMP-lysine intermediate. The ATP site is built by R236 and E283. Residues E283 and E377 each coordinate Mg(2+). The ATP site is built by K382 and K397.

This sequence belongs to the ATP-dependent DNA ligase family. As to quaternary structure, interacts with host TOP2A and TOP2B. Mg(2+) is required as a cofactor.

It is found in the host cytoplasm. The enzyme catalyses ATP + (deoxyribonucleotide)n-3'-hydroxyl + 5'-phospho-(deoxyribonucleotide)m = (deoxyribonucleotide)n+m + AMP + diphosphate.. In terms of biological role, DNA ligase that seals nicks in double-stranded DNA during DNA replication, DNA recombination and DNA repair. Recruits cellular topoisomerase II to sites of viral replication and assembly. Contributes to the repair of the viral genome following UV irradiation. The sequence is that of DNA ligase (OPG180) from Vaccinia virus (strain Western Reserve) (VACV).